A 188-amino-acid polypeptide reads, in one-letter code: Succinate dehydrogenase [ubiquinone] cytochrome b large subunit, mitochondrial (188 aa).

Residues 1–31 constitute a mitochondrion transit peptide; that stretch reads MSLLPYNATLCRVLRHNVKFIRSVQTSAARV. Over 32–69 the chain is Mitochondrial matrix; the sequence is SAEKTPIQVWGWDYLMRQRALKRPIAPHLTIYKPQMTW. A helical transmembrane segment spans residues 70–95; that stretch reads MVSGLHRVTGCAMAGTLLIGGVGFSV. Residues Ser-72 and Arg-76 each contribute to the a rhodoquinol site. Ser-72 and Arg-76 together coordinate a ubiquinone. Topologically, residues 96–113 are mitochondrial intermembrane; it reads LPLDFTTFVEFIRGLGIP. The chain crosses the membrane as a helical span at residues 114–140; sequence WVILDTFKFIIAFPIAFHTLNGIRFIG. Position 131 (His-131) interacts with heme b. Topologically, residues 141–153 are mitochondrial matrix; the sequence is FDMAKGTDIPSIY. Residues 154–176 form a helical membrane-spanning segment; it reads RGAYLVLGLAALISLAVVVYPRW. Over 177-188 the chain is Mitochondrial intermembrane; sequence ERHKKATLPTNH.

It belongs to the cytochrome b558 family. In terms of assembly, component of the mitochondrial electron transport chain complex II composed of four subunits: a flavoprotein (Fp), an iron-sulfur protein (Ip), and a large cytochrome b (CybL) subunit and a small cytochrome b (CybS) subunit. There are 2 developmental stage-specific forms of complex II which have the Ip and CybL subunits in common. Complex II from the free-living larvae (aerobic environment) acts as a succinate dehydrogenase and is composed of the common subunit Ip and CybL and the stage specific subunits FpL and CybSL. Complex II from parasitic larvae and adults (anaerobic environment) acts as a fumarate reductase and is composed of the common subunit Ip and CybL and the stage specific subunits FpA and CybSA. Requires heme b as cofactor. As to expression, expressed in adult muscles (at protein level).

Its subcellular location is the mitochondrion inner membrane. Its pathway is carbohydrate metabolism; tricarboxylic acid cycle; fumarate from succinate (eukaryal route): step 1/1. Membrane-bound large subunit (CybL) of the mitochondrial electron transport chain complex II, which together with the membrane-bound small subunit (CybS), anchor the catalytic subunits to the inner mitochondria membrane. During the free-living egg-larvae stages, which occur in an aerobic environment, complex II acts as a succinate dehydrogenase by transferring electrons from succinate to ubiquinone. During the parasitic larvae and adult stages, which occur in an anaerobic environment, complex II acts as a fumarate reductase by transferring electrons from rhodoquinol to fumarate. This Ascaris suum (Pig roundworm) protein is Succinate dehydrogenase [ubiquinone] cytochrome b large subunit, mitochondrial.